The following is an 89-amino-acid chain: Small ribosomal subunit protein uS15 (89 aa).

It belongs to the universal ribosomal protein uS15 family. As to quaternary structure, part of the 30S ribosomal subunit. Forms a bridge to the 50S subunit in the 70S ribosome, contacting the 23S rRNA.

Its function is as follows. One of the primary rRNA binding proteins, it binds directly to 16S rRNA where it helps nucleate assembly of the platform of the 30S subunit by binding and bridging several RNA helices of the 16S rRNA. Functionally, forms an intersubunit bridge (bridge B4) with the 23S rRNA of the 50S subunit in the ribosome. The polypeptide is Small ribosomal subunit protein uS15 (Pseudomonas aeruginosa (strain LESB58)).